We begin with the raw amino-acid sequence, 647 residues long: 1-deoxy-D-xylulose-5-phosphate synthase (647 aa).

Residues H74 and 115-117 (GHS) each bind thiamine diphosphate. Residue D146 participates in Mg(2+) binding. Thiamine diphosphate-binding positions include 147–148 (GA), N175, Y286, and E367. N175 provides a ligand contact to Mg(2+).

This sequence belongs to the transketolase family. DXPS subfamily. Homodimer. Mg(2+) is required as a cofactor. The cofactor is thiamine diphosphate.

It carries out the reaction D-glyceraldehyde 3-phosphate + pyruvate + H(+) = 1-deoxy-D-xylulose 5-phosphate + CO2. Its pathway is metabolic intermediate biosynthesis; 1-deoxy-D-xylulose 5-phosphate biosynthesis; 1-deoxy-D-xylulose 5-phosphate from D-glyceraldehyde 3-phosphate and pyruvate: step 1/1. Catalyzes the acyloin condensation reaction between C atoms 2 and 3 of pyruvate and glyceraldehyde 3-phosphate to yield 1-deoxy-D-xylulose-5-phosphate (DXP). The polypeptide is 1-deoxy-D-xylulose-5-phosphate synthase (Heliobacterium modesticaldum (strain ATCC 51547 / Ice1)).